The following is a 360-amino-acid chain: Ribosomal RNA small subunit methyltransferase C (360 aa).

Belongs to the methyltransferase superfamily. RsmC family. Monomer.

Its subcellular location is the cytoplasm. The enzyme catalyses guanosine(1207) in 16S rRNA + S-adenosyl-L-methionine = N(2)-methylguanosine(1207) in 16S rRNA + S-adenosyl-L-homocysteine + H(+). Specifically methylates the guanine in position 1207 of 16S rRNA in the 30S particle. The sequence is that of Ribosomal RNA small subunit methyltransferase C from Alteromonas mediterranea (strain DSM 17117 / CIP 110805 / LMG 28347 / Deep ecotype).